A 519-amino-acid polypeptide reads, in one-letter code: MKVQSFDALYDEDSLMQKASRQEFSKYVDHIGTEGMQARSGLLQERQYPHLNALVDELMRQNPRLNDSLKERLELLRTGEAQVVITGQQTGIFGGPMYAVYKLLTCLKVARQTEELLNRPVLPIFWLATEDHDFDEINHLIVPTHDFRTRKLAIQAPDSISRSVSRLAFDQTAVKDIVRQALCTERETPYTKELLALSDRLIESSTTYGEFFASFMGELVDHDIIFFDADTEAVRQLEIPFFERLIQDNAEIRQALSKGIQETTELPDTFLNEEAAHLFVEDIGRDLLYPGQDFVTKQGKTYTELELLALLYASPERFSNSVVTRPLMQDYLFPTLAYIGGPGEIAYWTRLRPLFHHFDWTMPVLIPRMGAVMLQARDEKGLRRHGLSLEQVLHTGVPLTPFDAAAIKRHLHDATLLGTVLVEEVTRIEQQELRTTAVATKLNKQLQLAVETIVDQKRRLHEQANRSDRALQYQLAPDHAPQERIHSILPWLNRYGLNLVQTLRMHYEQTEAEQLKIML.

2 coiled-coil regions span residues 51–71 (LNAL…SLKE) and 440–464 (TKLN…HEQA).

Belongs to the BshC family.

Functionally, involved in bacillithiol (BSH) biosynthesis. May catalyze the last step of the pathway, the addition of cysteine to glucosamine malate (GlcN-Mal) to generate BSH. The sequence is that of Putative cysteine ligase BshC from Exiguobacterium sibiricum (strain DSM 17290 / CCUG 55495 / CIP 109462 / JCM 13490 / 255-15).